A 181-amino-acid polypeptide reads, in one-letter code: Large ribosomal subunit protein uL5 (181 aa).

The protein belongs to the universal ribosomal protein uL5 family. As to quaternary structure, part of the 50S ribosomal subunit; part of the 5S rRNA/L5/L18/L25 subcomplex. Contacts the 5S rRNA and the P site tRNA. Forms a bridge to the 30S subunit in the 70S ribosome.

Functionally, this is one of the proteins that bind and probably mediate the attachment of the 5S RNA into the large ribosomal subunit, where it forms part of the central protuberance. In the 70S ribosome it contacts protein S13 of the 30S subunit (bridge B1b), connecting the 2 subunits; this bridge is implicated in subunit movement. Contacts the P site tRNA; the 5S rRNA and some of its associated proteins might help stabilize positioning of ribosome-bound tRNAs. The polypeptide is Large ribosomal subunit protein uL5 (Helicobacter pylori (strain G27)).